The sequence spans 509 residues: Maturase K (509 aa).

This sequence belongs to the intron maturase 2 family. MatK subfamily.

The protein resides in the plastid. Its subcellular location is the chloroplast. Functionally, usually encoded in the trnK tRNA gene intron. Probably assists in splicing its own and other chloroplast group II introns. This chain is Maturase K, found in Nicotiana plumbaginifolia (Leadwort-leaved tobacco).